Consider the following 383-residue polypeptide: MAEQRPLTIALVAGETSGDILGAGLIRALKARIPNARFVGVAGPLMQAEGCEAWYEMEELAVMGIVEVLGRLRRLLHIRADLTRRFGELRPDVFVGIDAPDFNITLEGNLKKQGIKTIHYVSPSVWAWRQKRVFKIGRSTDLVLAFLPFEKAFYDKFNVPCRFIGHTMADAMPLDPDKGAARDRLGIPHSVRCLALLPGSRGAEVEMLSADFLKTAQLLRATYPDLQVVVPLVNAKRREQFERIKAETAPDMIVHMLDGQARDAMIASDAALLASGTAALECMLAKCPMVVGYRMKPFTFWLAKRLVKTDYVSLPNLLAGRELVKELLQDECEPQALAAALQPLLADGKTSHEMHETFRALHQQIRCNADEQAADAVLELAKQ.

Belongs to the LpxB family.

It carries out the reaction 2-N,3-O-bis[(3R)-3-hydroxytetradecanoyl]-alpha-D-glucosaminyl 1-phosphate + UDP-2-N,3-O-bis[(3R)-3-hydroxytetradecanoyl]-alpha-D-glucosamine = lipid A disaccharide (E. coli) + UDP + H(+). It catalyses the reaction a lipid X + a UDP-2-N,3-O-bis[(3R)-3-hydroxyacyl]-alpha-D-glucosamine = a lipid A disaccharide + UDP + H(+). Its pathway is glycolipid biosynthesis; lipid IV(A) biosynthesis; lipid IV(A) from (3R)-3-hydroxytetradecanoyl-[acyl-carrier-protein] and UDP-N-acetyl-alpha-D-glucosamine: step 5/6. Functionally, condensation of UDP-2,3-diacylglucosamine and 2,3-diacylglucosamine-1-phosphate to form lipid A disaccharide, a precursor of lipid A, a phosphorylated glycolipid that anchors the lipopolysaccharide to the outer membrane of the cell. The sequence is that of Lipid-A-disaccharide synthase from Klebsiella pneumoniae subsp. pneumoniae (strain ATCC 700721 / MGH 78578).